A 412-amino-acid polypeptide reads, in one-letter code: Double C2-like domain-containing protein beta (412 aa).

The segment at 1-36 is negatively regulates targeting to plasma membrane; the sequence is MTLRRRGEKATISIQEHMAIDVCPGPIRPIKQISDY. A mediates interaction with DYNLT1 region spans residues 1–90; sequence MTLRRRGEKA…EDVDQLFGAY (90 aa). The interval 38 to 123 is disordered; it reads PRFPRGLPPD…PDADGYESDD (86 aa). Residues 49-70 show a composition bias toward low complexity; the sequence is GPRAAAPPDAPARPAVAGAGRR. Over residues 95 to 108 the composition is skewed to pro residues; that stretch reads GPSPGPSPARPPAK. Positions 112 to 123 are enriched in acidic residues; it reads DEPDADGYESDD. 2 consecutive C2 domains span residues 126 to 250 and 266 to 399; these read ALGT…SICL and ERGR…ERWH. Ca(2+)-binding residues include Asp-157, Asp-163, Asp-218, Asp-220, Asp-297, Asp-303, Asp-357, Asp-359, and Asp-365. The segment at 257–375 is mediates interaction with STXBP3; that stretch reads DKTEDKSLEE…FIGGVVLGIH (119 aa). Ser-411 is modified (phosphoserine).

In terms of assembly, interacts with the SNARE (soluble N-ethylmaleimide-sensitive factor attached protein receptor) complex composed of SNAP25, STX1A and VAMP2; the interaction is calcium-dependent and competitive with SYT1. Interacts with STX4; the interaction is calcium-dependent, increased by insulin and glucose, and mediates vesicle fusion with plasma membrane in pancreatic cells and adipocytes. Interacts with STXBP3; the interaction is direct, occurs at the cell membrane and regulates glucose-stimulated insulin secretion. May interact with UNC13A; the interaction mediates targeting to the plasma membrane. Interacts with cytoplasmic dynein light chain DYNLT1. Ca(2+) is required as a cofactor. In terms of tissue distribution, widely expressed with highest levels in brain and kidney. Expressed in pancreatic islet cells (at protein level).

The protein resides in the cytoplasm. It is found in the cytoplasmic granule. The protein localises to the cell membrane. Its function is as follows. Calcium sensor which positively regulates SNARE-dependent fusion of vesicles with membranes. Binds phospholipids in a calcium-dependent manner and may act at the priming stage of fusion by modifying membrane curvature to stimulate fusion. Involved in calcium-triggered exocytosis in chromaffin cells and calcium-dependent spontaneous release of neurotransmitter in absence of action potentials in neuronal cells. Involved both in glucose-stimulated insulin secretion in pancreatic cells and insulin-dependent GLUT4 transport to the plasma membrane in adipocytes. The protein is Double C2-like domain-containing protein beta of Homo sapiens (Human).